A 472-amino-acid polypeptide reads, in one-letter code: 3-isopropylmalate dehydratase large subunit (472 aa).

[4Fe-4S] cluster is bound by residues C347, C407, and C410.

This sequence belongs to the aconitase/IPM isomerase family. LeuC type 1 subfamily. As to quaternary structure, heterodimer of LeuC and LeuD. It depends on [4Fe-4S] cluster as a cofactor.

The enzyme catalyses (2R,3S)-3-isopropylmalate = (2S)-2-isopropylmalate. Its pathway is amino-acid biosynthesis; L-leucine biosynthesis; L-leucine from 3-methyl-2-oxobutanoate: step 2/4. Functionally, catalyzes the isomerization between 2-isopropylmalate and 3-isopropylmalate, via the formation of 2-isopropylmaleate. The polypeptide is 3-isopropylmalate dehydratase large subunit (Synechococcus sp. (strain CC9902)).